Consider the following 163-residue polypeptide: Large ribosomal subunit protein uL15 (163 aa).

Positions 1–43 are disordered; the sequence is MKLNEIADNEGSRKKRTRVGRGIGSGKGKQSGRGGKGQTARSG. A compositionally biased stretch (gly residues) spans 21–37; that stretch reads RGIGSGKGKQSGRGGKG.

It belongs to the universal ribosomal protein uL15 family. As to quaternary structure, part of the 50S ribosomal subunit.

In terms of biological role, binds to the 23S rRNA. This Afipia carboxidovorans (strain ATCC 49405 / DSM 1227 / KCTC 32145 / OM5) (Oligotropha carboxidovorans) protein is Large ribosomal subunit protein uL15.